The chain runs to 153 residues: Ribosomal RNA large subunit methyltransferase H (153 aa).

Positions 71 and 102 each coordinate S-adenosyl-L-methionine.

This sequence belongs to the RNA methyltransferase RlmH family. As to quaternary structure, homodimer.

Its subcellular location is the cytoplasm. It catalyses the reaction pseudouridine(1915) in 23S rRNA + S-adenosyl-L-methionine = N(3)-methylpseudouridine(1915) in 23S rRNA + S-adenosyl-L-homocysteine + H(+). In terms of biological role, specifically methylates the pseudouridine at position 1915 (m3Psi1915) in 23S rRNA. The polypeptide is Ribosomal RNA large subunit methyltransferase H (Anaeromyxobacter dehalogenans (strain 2CP-1 / ATCC BAA-258)).